The following is a 345-amino-acid chain: Heat-inducible transcription repressor HrcA (345 aa).

The protein belongs to the HrcA family.

Negative regulator of class I heat shock genes (grpE-dnaK-dnaJ and groELS operons). Prevents heat-shock induction of these operons. The protein is Heat-inducible transcription repressor HrcA of Listeria monocytogenes serotype 1/2a (strain 10403S).